The primary structure comprises 165 residues: Basic transcription factor 3 (165 aa).

In terms of domain architecture, NAC-A/B spans 33–97 (TTDDKRLQST…PQTKKLQDIL (65 aa)). Residues 120–134 (QKQASGEGNAASATI) are compositionally biased toward polar residues. The disordered stretch occupies residues 120–144 (QKQASGEGNAASATIQEEDDDDVPE).

Belongs to the NAC-beta family. As to quaternary structure, part of the nascent polypeptide-associated complex (NAC). Interacts with EIF(ISO)4E.

The protein is Basic transcription factor 3 of Arabidopsis thaliana (Mouse-ear cress).